The sequence spans 569 residues: Toxin YxiD (569 aa).

One can recognise an LXG domain in the interval 1-235 (MKTLDVHALH…NPQMKQADDS (235 aa)). Positions 8-91 (ALHEGIQHTI…QHAISSVESN (84 aa)) form a coiled coil. The segment at 548–569 (HQAGIHGTGSPANELFKGGKKK) is disordered.

The protein in the N-terminal section; belongs to the LXG family. As to quaternary structure, probably interacts with cognate immunity protein YxxD but not with non-cognate immunity proteins. The interaction inhibits the toxic activity of YxxD.

The protein resides in the secreted. In terms of biological role, toxic component of one of 6 LXG toxin-immunity modules in this strain. They promote kin selection, mediate competition in biofilms, and drive spatial segregation of different strains, indicating that LXG toxins may help avoid warfare between strains in biofilms. Mediates intercellular competition during biofilm formation; disruption of the operon disadvantages the bacteria, but overexpression of the cognate immunity protein restores growth in competition with wild-type. Overexpression alone in situ causes growth arrest but not cell lysis, a large decrease in chromosomal DNA content and the production of anucleate cells. No effect is seen on rRNA. Co-overexpression with cognate immunity protein YxxD does not cause growth arrest. The toxic effect is not dependent on the epsA and tapA operons which are required for biofilm formation. This chain is Toxin YxiD (yxiD), found in Bacillus subtilis (strain 168).